The sequence spans 257 residues: Small ribosomal subunit protein uS4c (257 aa).

2 S4 RNA-binding domains span residues 110-170 (MRLD…QLVN) and 189-255 (KTLP…KNYL).

It belongs to the universal ribosomal protein uS4 family. Part of the 30S ribosomal subunit. Contacts protein S5. The interaction surface between S4 and S5 is involved in control of translational fidelity.

It localises to the plastid. The protein localises to the chloroplast. In terms of biological role, one of the primary rRNA binding proteins, it binds directly to 16S rRNA where it nucleates assembly of the body of the 30S subunit. Its function is as follows. With S5 and S12 plays an important role in translational accuracy. The sequence is that of Small ribosomal subunit protein uS4c (rps4) from Chlamydomonas reinhardtii (Chlamydomonas smithii).